A 317-amino-acid chain; its full sequence is Ribose-phosphate pyrophosphokinase (317 aa).

Residues 43–45 and 102–103 each bind ATP; these read DGE and RQ. 2 residues coordinate Mg(2+): histidine 136 and aspartate 175. Lysine 198 is a catalytic residue. D-ribose 5-phosphate contacts are provided by residues arginine 200, aspartate 224, and 228-232; that span reads DTAGT.

The protein belongs to the ribose-phosphate pyrophosphokinase family. Class I subfamily. As to quaternary structure, homohexamer. Mg(2+) serves as cofactor.

The protein resides in the cytoplasm. It catalyses the reaction D-ribose 5-phosphate + ATP = 5-phospho-alpha-D-ribose 1-diphosphate + AMP + H(+). It participates in metabolic intermediate biosynthesis; 5-phospho-alpha-D-ribose 1-diphosphate biosynthesis; 5-phospho-alpha-D-ribose 1-diphosphate from D-ribose 5-phosphate (route I): step 1/1. Functionally, involved in the biosynthesis of the central metabolite phospho-alpha-D-ribosyl-1-pyrophosphate (PRPP) via the transfer of pyrophosphoryl group from ATP to 1-hydroxyl of ribose-5-phosphate (Rib-5-P). This chain is Ribose-phosphate pyrophosphokinase, found in Bacillus anthracis.